The primary structure comprises 126 residues: Large ribosomal subunit protein bL12 (126 aa).

Belongs to the bacterial ribosomal protein bL12 family. In terms of assembly, homodimer. Part of the ribosomal stalk of the 50S ribosomal subunit. Forms a multimeric L10(L12)X complex, where L10 forms an elongated spine to which 2 to 4 L12 dimers bind in a sequential fashion. Binds GTP-bound translation factors.

Functionally, forms part of the ribosomal stalk which helps the ribosome interact with GTP-bound translation factors. Is thus essential for accurate translation. The polypeptide is Large ribosomal subunit protein bL12 (Nocardia farcinica (strain IFM 10152)).